The chain runs to 355 residues: Probable GTP 3',8-cyclase (355 aa).

The 229-residue stretch at 5–233 (AYGRPLKDLR…GRLHNRRVYR (229 aa)) folds into the Radical SAM core domain. GTP is bound at residue arginine 14. Positions 21, 25, and 28 each coordinate [4Fe-4S] cluster. A GTP-binding site is contributed by lysine 69. Glycine 73 contacts S-adenosyl-L-methionine. Residue threonine 97 participates in GTP binding. Position 121 (serine 121) interacts with S-adenosyl-L-methionine. Lysine 157 is a GTP binding site. [4Fe-4S] cluster is bound by residues cysteine 252 and cysteine 255. 257 to 259 (RVR) is a GTP binding site. Cysteine 269 provides a ligand contact to [4Fe-4S] cluster.

The protein belongs to the radical SAM superfamily. MoaA family. [4Fe-4S] cluster is required as a cofactor.

It carries out the reaction GTP + AH2 + S-adenosyl-L-methionine = (8S)-3',8-cyclo-7,8-dihydroguanosine 5'-triphosphate + 5'-deoxyadenosine + L-methionine + A + H(+). The protein operates within cofactor biosynthesis; molybdopterin biosynthesis. Catalyzes the cyclization of GTP to (8S)-3',8-cyclo-7,8-dihydroguanosine 5'-triphosphate. The polypeptide is Probable GTP 3',8-cyclase (Aeropyrum pernix (strain ATCC 700893 / DSM 11879 / JCM 9820 / NBRC 100138 / K1)).